We begin with the raw amino-acid sequence, 361 residues long: Probable galacturonosyltransferase-like 5 (361 aa).

The Cytoplasmic portion of the chain corresponds to 1 to 6 (MHWITR). The helical; Signal-anchor for type II membrane protein transmembrane segment at 7–27 (FSAFFSAALAMILLSPSLQSF) threads the bilayer. Topologically, residues 28 to 361 (SPAAAIRSSH…APYDLYKHSH (334 aa)) are lumenal. N-linked (GlcNAc...) asparagine glycosylation is found at N218 and N234.

This sequence belongs to the glycosyltransferase 8 family.

It localises to the golgi apparatus membrane. The protein operates within glycan metabolism; pectin biosynthesis. In terms of biological role, may be involved in pectin and/or xylans biosynthesis in cell walls. The sequence is that of Probable galacturonosyltransferase-like 5 (GATL5) from Arabidopsis thaliana (Mouse-ear cress).